A 353-amino-acid polypeptide reads, in one-letter code: Sulfate/thiosulfate import ATP-binding protein CysA (353 aa).

The ABC transporter domain occupies 3 to 237 (IQVKNIEKHF…PATPFVFDFL (235 aa)). 35–42 (GPSGCGKT) is an ATP binding site.

It belongs to the ABC transporter superfamily. Sulfate/tungstate importer (TC 3.A.1.6) family. In terms of assembly, the complex is composed of two ATP-binding proteins (CysA), two transmembrane proteins (CysT and CysW) and a solute-binding protein (CysP).

It is found in the cell inner membrane. The enzyme catalyses sulfate(out) + ATP + H2O = sulfate(in) + ADP + phosphate + H(+). It carries out the reaction thiosulfate(out) + ATP + H2O = thiosulfate(in) + ADP + phosphate + H(+). Functionally, part of the ABC transporter complex CysAWTP involved in sulfate/thiosulfate import. Responsible for energy coupling to the transport system. In Acinetobacter baylyi (strain ATCC 33305 / BD413 / ADP1), this protein is Sulfate/thiosulfate import ATP-binding protein CysA.